The primary structure comprises 224 residues: Phosphoribosylformylglycinamidine synthase subunit PurQ (224 aa).

In terms of domain architecture, Glutamine amidotransferase type-1 spans 2-224 (KFAVIVFPGS…IVDNFVKGGV (223 aa)). Cys86 functions as the Nucleophile in the catalytic mechanism. Residues His194 and Glu196 contribute to the active site.

As to quaternary structure, part of the FGAM synthase complex composed of 1 PurL, 1 PurQ and 2 PurS subunits.

The protein resides in the cytoplasm. The enzyme catalyses N(2)-formyl-N(1)-(5-phospho-beta-D-ribosyl)glycinamide + L-glutamine + ATP + H2O = 2-formamido-N(1)-(5-O-phospho-beta-D-ribosyl)acetamidine + L-glutamate + ADP + phosphate + H(+). It catalyses the reaction L-glutamine + H2O = L-glutamate + NH4(+). The protein operates within purine metabolism; IMP biosynthesis via de novo pathway; 5-amino-1-(5-phospho-D-ribosyl)imidazole from N(2)-formyl-N(1)-(5-phospho-D-ribosyl)glycinamide: step 1/2. In terms of biological role, part of the phosphoribosylformylglycinamidine synthase complex involved in the purines biosynthetic pathway. Catalyzes the ATP-dependent conversion of formylglycinamide ribonucleotide (FGAR) and glutamine to yield formylglycinamidine ribonucleotide (FGAM) and glutamate. The FGAM synthase complex is composed of three subunits. PurQ produces an ammonia molecule by converting glutamine to glutamate. PurL transfers the ammonia molecule to FGAR to form FGAM in an ATP-dependent manner. PurS interacts with PurQ and PurL and is thought to assist in the transfer of the ammonia molecule from PurQ to PurL. The sequence is that of Phosphoribosylformylglycinamidine synthase subunit PurQ from Caldanaerobacter subterraneus subsp. tengcongensis (strain DSM 15242 / JCM 11007 / NBRC 100824 / MB4) (Thermoanaerobacter tengcongensis).